The primary structure comprises 117 residues: Glycine cleavage system H-like protein (117 aa).

The 83-residue stretch at 21–103 folds into the Lipoyl-binding domain; the sequence is IVKLGLSSQM…ESEGWFVVLQ (83 aa). Lys62 is subject to N6-lipoyllysine.

It belongs to the GcvH family. The cofactor is (R)-lipoate.

In Chlamydia trachomatis serovar D (strain ATCC VR-885 / DSM 19411 / UW-3/Cx), this protein is Glycine cleavage system H-like protein.